The following is a 439-amino-acid chain: Serine/threonine-protein kinase 2 (439 aa).

In terms of domain architecture, Protein kinase spans 87 to 439 (NDDFYHISTG…IFSDWINGGN (353 aa)). ATP-binding positions include 93 to 101 (ISTGGYGIV) and Lys117. Asp307 serves as the catalytic Proton acceptor.

Belongs to the protein kinase superfamily. Ser/Thr protein kinase family. Poxviruses subfamily. Phosphorylated in vivo. Autophosphorylated in vitro.

The protein resides in the host endoplasmic reticulum. It localises to the host endoplasmic reticulum-Golgi intermediate compartment. The enzyme catalyses L-seryl-[protein] + ATP = O-phospho-L-seryl-[protein] + ADP + H(+). The catalysed reaction is L-threonyl-[protein] + ATP = O-phospho-L-threonyl-[protein] + ADP + H(+). Its function is as follows. Essential serine-protein kinase involved in the early stage of virion morphogenesis. The chain is Serine/threonine-protein kinase 2 (OPG054) from Vaccinia virus (strain Ankara) (VACV).